The following is a 267-amino-acid chain: MTQVSMRDLFEAGAHFGHRARFWNPKMAPYIYGKRGDIHIINLEQTVPMLNDALNFLSAVVGNGGRVMFVGTKRSASDAISEAASRCGMPYVNFRWLGGMMTNFKTIRQSIRRLEEIEKMAEDGTYDKLSKKEVIVLEREREKLARALTGIRSMKHLPDVLFVVDVGHERIAIQEAMKLGIPVVGVVDTNNDIEGVDYIIPGNDDSVRAIRLYVNAAADTIEHAKAAAAVRGGDNAEEELAEAISQEEPSAAEELPDDMADNENEFE.

The interval 234-267 (DNAEEELAEAISQEEPSAAEELPDDMADNENEFE) is disordered. Acidic residues predominate over residues 250–267 (SAAEELPDDMADNENEFE).

Belongs to the universal ribosomal protein uS2 family.

The chain is Small ribosomal subunit protein uS2 from Dichelobacter nodosus (strain VCS1703A).